The sequence spans 75 residues: Small ribosomal subunit protein bS18 (75 aa).

The protein belongs to the bacterial ribosomal protein bS18 family. As to quaternary structure, part of the 30S ribosomal subunit. Forms a tight heterodimer with protein bS6.

Functionally, binds as a heterodimer with protein bS6 to the central domain of the 16S rRNA, where it helps stabilize the platform of the 30S subunit. The polypeptide is Small ribosomal subunit protein bS18 (Baumannia cicadellinicola subsp. Homalodisca coagulata).